A 122-amino-acid polypeptide reads, in one-letter code: Non-specific lipid-transfer protein (122 aa).

Residues 1-19 (MGVSRACFVVMVVVYMVVA) form the signal peptide. Positions 20–29 (ATPNVKLAEA) are excised as a propeptide. 4 cysteine pairs are disulfide-bonded: cysteine 32/cysteine 81, cysteine 42/cysteine 58, cysteine 59/cysteine 104, and cysteine 79/cysteine 118.

Monomer.

Functionally, plant non-specific lipid-transfer proteins transfer phospholipids as well as galactolipids across membranes. May play a role in wax or cutin deposition in the cell walls of expanding epidermal cells and certain secretory tissues. Binds saturated fatty acids, unsaturated fatty acids, lysolipids and, with highest efficiency, jasmonic acid. Has weak antimicrobial activity against fungi. Inhibits spore germination and hyphae elongation in A.niger VKM F-2259 and N.crassa VKM F-184. Has no antibacterial activity against A.tumefaciens A281, C.michiganensis VKM Ac-144 and P.syringae VKM B-1546. This is Non-specific lipid-transfer protein from Anethum graveolens (Dill).